We begin with the raw amino-acid sequence, 92 residues long: N(2)-fixation sustaining protein CowN (92 aa).

Belongs to the CowN family.

Functionally, is required to sustain N(2)-dependent growth in the presence of low levels of carbon monoxide (CO). Probably acts by protecting the N(2) fixation ability of the nitrogenase complex, which is inactivated in the presence of CO. The protein is N(2)-fixation sustaining protein CowN of Rhodobacter capsulatus (strain ATCC BAA-309 / NBRC 16581 / SB1003).